Here is a 532-residue protein sequence, read N- to C-terminus: Fe-S cluster assembly factor HCF101, chloroplastic (532 aa).

The N-terminal 61 residues, 1–61, are a transit peptide targeting the chloroplast; the sequence is MPLLHPQSLR…RVSQNLSVAK (61 aa). Residue Ala62 is modified to N-acetylalanine. 184–191 contacts ATP; that stretch reads CKGGVGKS.

This sequence belongs to the Mrp/NBP35 ATP-binding proteins family. The cofactor is [4Fe-4S] cluster. In terms of tissue distribution, expressed in aerial tissues exposed to light. Very low expression in roots.

It is found in the plastid. It localises to the chloroplast stroma. In terms of biological role, required for photosystem I (PSI) biosynthesis and assembly. May serve as a chloroplast scaffold protein that specifically assembles iron-sulfur (4Fe-4S) clusters and transfers them to the chloroplast PSI and ferredoxin-thioredoxin (FTR) complexes. Can assemble a 4Fe-4S cluster and transfer it to apoproteins in yeast cells. Probably not required for assembly or stability of plastidic 2Fe-2S clusters. This is Fe-S cluster assembly factor HCF101, chloroplastic (HCF101) from Arabidopsis thaliana (Mouse-ear cress).